Consider the following 356-residue polypeptide: Holliday junction branch migration complex subunit RuvB (356 aa).

The segment at 13–201 is large ATPase domain (RuvB-L); that stretch reads SSNLSRKTRL…FGITQRLNFY (189 aa). Positions 15-35 are disordered; that stretch reads NLSRKTRLLDPTPSLEEGKVR. Residues L40, R41, G82, K85, T86, T87, 148-150, R191, Y201, and R238 contribute to the ATP site; that span reads EDF. A Mg(2+)-binding site is contributed by T86. Positions 202-273 are small ATPAse domain (RuvB-S); that stretch reads SISDLNRIIQ…LVDKSLTLHQ (72 aa). The segment at 276–356 is head domain (RuvB-H); the sequence is ECGLDQSDRR…NSCKNSPIIK (81 aa). 2 residues coordinate DNA: R331 and R336.

Belongs to the RuvB family. Homohexamer. Forms an RuvA(8)-RuvB(12)-Holliday junction (HJ) complex. HJ DNA is sandwiched between 2 RuvA tetramers; dsDNA enters through RuvA and exits via RuvB. An RuvB hexamer assembles on each DNA strand where it exits the tetramer. Each RuvB hexamer is contacted by two RuvA subunits (via domain III) on 2 adjacent RuvB subunits; this complex drives branch migration. In the full resolvosome a probable DNA-RuvA(4)-RuvB(12)-RuvC(2) complex forms which resolves the HJ.

It is found in the cytoplasm. It carries out the reaction ATP + H2O = ADP + phosphate + H(+). The RuvA-RuvB-RuvC complex processes Holliday junction (HJ) DNA during genetic recombination and DNA repair, while the RuvA-RuvB complex plays an important role in the rescue of blocked DNA replication forks via replication fork reversal (RFR). RuvA specifically binds to HJ cruciform DNA, conferring on it an open structure. The RuvB hexamer acts as an ATP-dependent pump, pulling dsDNA into and through the RuvAB complex. RuvB forms 2 homohexamers on either side of HJ DNA bound by 1 or 2 RuvA tetramers; 4 subunits per hexamer contact DNA at a time. Coordinated motions by a converter formed by DNA-disengaged RuvB subunits stimulates ATP hydrolysis and nucleotide exchange. Immobilization of the converter enables RuvB to convert the ATP-contained energy into a lever motion, pulling 2 nucleotides of DNA out of the RuvA tetramer per ATP hydrolyzed, thus driving DNA branch migration. The RuvB motors rotate together with the DNA substrate, which together with the progressing nucleotide cycle form the mechanistic basis for DNA recombination by continuous HJ branch migration. Branch migration allows RuvC to scan DNA until it finds its consensus sequence, where it cleaves and resolves cruciform DNA. In Prochlorococcus marinus (strain SARG / CCMP1375 / SS120), this protein is Holliday junction branch migration complex subunit RuvB.